The following is a 179-amino-acid chain: Large ribosomal subunit protein uL5 (179 aa).

It belongs to the universal ribosomal protein uL5 family. Part of the 50S ribosomal subunit; part of the 5S rRNA/L5/L18/L25 subcomplex. Contacts the 5S rRNA and the P site tRNA. Forms a bridge to the 30S subunit in the 70S ribosome.

Functionally, this is one of the proteins that bind and probably mediate the attachment of the 5S RNA into the large ribosomal subunit, where it forms part of the central protuberance. In the 70S ribosome it contacts protein S13 of the 30S subunit (bridge B1b), connecting the 2 subunits; this bridge is implicated in subunit movement. Contacts the P site tRNA; the 5S rRNA and some of its associated proteins might help stabilize positioning of ribosome-bound tRNAs. This chain is Large ribosomal subunit protein uL5, found in Solidesulfovibrio magneticus (strain ATCC 700980 / DSM 13731 / RS-1) (Desulfovibrio magneticus).